The following is a 123-amino-acid chain: uncharacterized protein (123 aa).

Residues 17–74 (FQKKKKTGSQTRRTLKPQPQQLQQNLPKGHETTGHTYERVLQQQGSQERSPGLMSEDS) are disordered. T30 is modified (phosphothreonine). Low complexity predominate over residues 32-43 (KPQPQQLQQNLP). Over residues 44–54 (KGHETTGHTYE) the composition is skewed to basic and acidic residues. S62 bears the Phosphoserine mark.

This is an uncharacterized protein from Homo sapiens (Human).